Here is a 254-residue protein sequence, read N- to C-terminus: Diphthine synthase (254 aa).

S-adenosyl-L-methionine-binding positions include Leu11, Asp87, Ile90, 115-116 (SV), Leu167, Leu208, and His233.

This sequence belongs to the diphthine synthase family. As to quaternary structure, homodimer.

The catalysed reaction is 2-[(3S)-amino-3-carboxypropyl]-L-histidyl-[translation elongation factor 2] + 3 S-adenosyl-L-methionine = diphthine-[translation elongation factor 2] + 3 S-adenosyl-L-homocysteine + 3 H(+). It functions in the pathway protein modification; peptidyl-diphthamide biosynthesis. S-adenosyl-L-methionine-dependent methyltransferase that catalyzes the trimethylation of the amino group of the modified target histidine residue in translation elongation factor 2 (EF-2), to form an intermediate called diphthine. The three successive methylation reactions represent the second step of diphthamide biosynthesis. In Metallosphaera sedula (strain ATCC 51363 / DSM 5348 / JCM 9185 / NBRC 15509 / TH2), this protein is Diphthine synthase.